We begin with the raw amino-acid sequence, 349 residues long: Heat-inducible transcription repressor HrcA (349 aa).

It belongs to the HrcA family.

Functionally, negative regulator of class I heat shock genes (grpE-dnaK-dnaJ and groELS operons). Prevents heat-shock induction of these operons. The polypeptide is Heat-inducible transcription repressor HrcA (Mycoplasmoides gallisepticum (strain R(low / passage 15 / clone 2)) (Mycoplasma gallisepticum)).